Here is a 185-residue protein sequence, read N- to C-terminus: UPF0301 protein HDEF_0602 (185 aa).

It belongs to the UPF0301 (AlgH) family.

This chain is UPF0301 protein HDEF_0602, found in Hamiltonella defensa subsp. Acyrthosiphon pisum (strain 5AT).